The sequence spans 318 residues: Olfactory receptor 5G26 (318 aa).

Over 1–28 (MMHRNQTVVTEFFFTGLTSSFHLQIVLF) the chain is Extracellular. Asparagine 5 carries an N-linked (GlcNAc...) asparagine glycan. Residues 29 to 49 (LTFLCVYLATLLGNLGMIILI) traverse the membrane as a helical segment. Residues 50 to 56 (HLDTRLH) are Cytoplasmic-facing. Residues 57–77 (IPMYFFLSHLSFVDACSSSVI) traverse the membrane as a helical segment. The Extracellular portion of the chain corresponds to 78 to 93 (SPKMLSDMFVDKKVIS). The chain crosses the membrane as a helical span at residues 94 to 114 (FLGCAIQLCLFSQFVVTECFL). A disulfide bond links cysteine 97 and cysteine 189. Residues 115 to 144 (LASMAYDRYVAICKPLLYTLIMSQRVCVQL) are Cytoplasmic-facing. A helical transmembrane segment spans residues 145-165 (VIGPYSIGFVSTMVHIISAFV). Residues 166 to 198 (LPYCGPNLINHFFCDLLPVLSLACANTQMKKRL) are Extracellular-facing. The chain crosses the membrane as a helical span at residues 199-219 (LFIVAGILGVFSGIIILVSYV). At 220–239 (YIAITILKISSADGRRKAFS) the chain is on the cytoplasmic side. Residues 240–260 (TCSSHLTAVSILYGTLFFIYV) form a helical membrane-spanning segment. Residues 261–271 (RPSSSFSLDIN) lie on the Extracellular side of the membrane. Residues 272–292 (KVVSLFYTTVIPMLNPFIYSL) traverse the membrane as a helical segment. Topologically, residues 293 to 318 (RNKEVKDALIRTFEKQFCYSFQDKIL) are cytoplasmic.

It belongs to the G-protein coupled receptor 1 family.

The protein resides in the cell membrane. Functionally, potential odorant receptor. This is Olfactory receptor 5G26 from Mus musculus (Mouse).